The following is a 201-amino-acid chain: Orotate phosphoribosyltransferase (201 aa).

113-121 (EDIITTGKS) is a binding site for 5-phospho-alpha-D-ribose 1-diphosphate. Positions 117 and 145 each coordinate orotate.

The protein belongs to the purine/pyrimidine phosphoribosyltransferase family. PyrE subfamily. Homodimer. Requires Mg(2+) as cofactor.

It carries out the reaction orotidine 5'-phosphate + diphosphate = orotate + 5-phospho-alpha-D-ribose 1-diphosphate. It functions in the pathway pyrimidine metabolism; UMP biosynthesis via de novo pathway; UMP from orotate: step 1/2. Its function is as follows. Catalyzes the transfer of a ribosyl phosphate group from 5-phosphoribose 1-diphosphate to orotate, leading to the formation of orotidine monophosphate (OMP). This chain is Orotate phosphoribosyltransferase, found in Helicobacter pylori (strain HPAG1).